Here is a 298-residue protein sequence, read N- to C-terminus: Leucine-rich repeat-containing protein 38 (298 aa).

Residues 1–31 (MSLCVAPRHPTGAAAALGLGSLLVLLGPGRA) form the signal peptide. 2 cysteine pairs are disulfide-bonded: Cys32–Cys38 and Cys36–Cys46. In terms of domain architecture, LRRNT spans 32 to 60 (CPAGCACTDPHTVDCRDRGLPSVPDPFPL). At 32 to 251 (CPAGCACTDP…ECKFSLSLTD (220 aa)) the chain is on the extracellular side. LRR repeat units lie at residues 61-82 (DVRK…FFIF), 85-106 (DLVY…TFSG), 109-130 (KLAF…AFRS), 133-154 (RLVK…AFES), and 157-177 (SLQV…AALD). Asn119 carries an N-linked (GlcNAc...) asparagine glycan. Residues 190–245 (NPWLCDCDFAHLFSWIQENTSKLPKGLDAIQCSLPMEDRRVALRELSEASFSECKF) form the LRRCT domain. 2 disulfide bridges follow: Cys194–Cys221 and Cys196–Cys243. The helical transmembrane segment at 252 to 272 (LFIIIFSGVAVSIAAIISSFF) threads the bilayer. Residues 273 to 298 (LATVVQCFQRCAPNKDTEDEDDDEDD) lie on the Cytoplasmic side of the membrane.

In terms of assembly, interacts with KCNMA1.

The protein localises to the cell membrane. Auxiliary protein of the large-conductance, voltage and calcium-activated potassium channel (BK alpha). Modulates gating properties by producing a marked shift in the BK channel's voltage dependence of activation in the hyperpolarizing direction, and in the absence of calcium. In Mus musculus (Mouse), this protein is Leucine-rich repeat-containing protein 38 (Lrrc38).